The following is a 630-amino-acid chain: 1-deoxy-D-xylulose-5-phosphate synthase (630 aa).

Thiamine diphosphate contacts are provided by residues histidine 75 and 116–118 (GHS). Mg(2+) is bound at residue aspartate 147. Residues 148 to 149 (GA), asparagine 176, tyrosine 287, and glutamate 367 each bind thiamine diphosphate. Asparagine 176 is a binding site for Mg(2+).

It belongs to the transketolase family. DXPS subfamily. In terms of assembly, homodimer. Mg(2+) is required as a cofactor. Requires thiamine diphosphate as cofactor.

It carries out the reaction D-glyceraldehyde 3-phosphate + pyruvate + H(+) = 1-deoxy-D-xylulose 5-phosphate + CO2. Its pathway is metabolic intermediate biosynthesis; 1-deoxy-D-xylulose 5-phosphate biosynthesis; 1-deoxy-D-xylulose 5-phosphate from D-glyceraldehyde 3-phosphate and pyruvate: step 1/1. Its function is as follows. Catalyzes the acyloin condensation reaction between C atoms 2 and 3 of pyruvate and glyceraldehyde 3-phosphate to yield 1-deoxy-D-xylulose-5-phosphate (DXP). The chain is 1-deoxy-D-xylulose-5-phosphate synthase from Treponema pallidum (strain Nichols).